The sequence spans 527 residues: BTB/POZ domain-containing protein At4g01160 (527 aa).

A BTB domain is found at 111–180 (NNNTSVLSVQ…MYSNSLSVTA (70 aa)). Positions 233–327 (VKPLTNAARQ…HMTTDRLKKI (95 aa)) constitute a BACK domain.

It functions in the pathway protein modification; protein ubiquitination. Functionally, may act as a substrate-specific adapter of an E3 ubiquitin-protein ligase complex (CUL3-RBX1-BTB) which mediates the ubiquitination and subsequent proteasomal degradation of target proteins. The sequence is that of BTB/POZ domain-containing protein At4g01160 from Arabidopsis thaliana (Mouse-ear cress).